The following is a 424-amino-acid chain: 3-phosphoshikimate 1-carboxyvinyltransferase (424 aa).

3 residues coordinate 3-phosphoshikimate: Lys-21, Ser-22, and Arg-26. Residue Lys-21 participates in phosphoenolpyruvate binding. Phosphoenolpyruvate is bound by residues Gly-91 and Arg-119. 3-phosphoshikimate contacts are provided by Ser-164, Gln-166, Asp-310, and Lys-337. Position 166 (Gln-166) interacts with phosphoenolpyruvate. The active-site Proton acceptor is the Asp-310. The phosphoenolpyruvate site is built by Arg-341 and Arg-382.

The protein belongs to the EPSP synthase family. In terms of assembly, monomer.

The protein localises to the cytoplasm. It carries out the reaction 3-phosphoshikimate + phosphoenolpyruvate = 5-O-(1-carboxyvinyl)-3-phosphoshikimate + phosphate. Its pathway is metabolic intermediate biosynthesis; chorismate biosynthesis; chorismate from D-erythrose 4-phosphate and phosphoenolpyruvate: step 6/7. Catalyzes the transfer of the enolpyruvyl moiety of phosphoenolpyruvate (PEP) to the 5-hydroxyl of shikimate-3-phosphate (S3P) to produce enolpyruvyl shikimate-3-phosphate and inorganic phosphate. In Campylobacter hominis (strain ATCC BAA-381 / DSM 21671 / CCUG 45161 / LMG 19568 / NCTC 13146 / CH001A), this protein is 3-phosphoshikimate 1-carboxyvinyltransferase.